We begin with the raw amino-acid sequence, 533 residues long: Zinc finger protein 692 (533 aa).

2 disordered regions span residues 124 to 251 (SLIP…PATL) and 290 to 310 (TESLDSPGSQAQSAPNPTCDE). Positions 149-178 (EARRKQEAEGLECEHRERTQETRLSRRVEP) are enriched in basic and acidic residues. Residues 190-208 (QVVEEEEEEEEEEEEEELL) are compositionally biased toward acidic residues. Ser233 is subject to Phosphoserine. Positions 290-305 (TESLDSPGSQAQSAPN) are enriched in polar residues. 5 consecutive C2H2-type zinc fingers follow at residues 329–354 (MPCDFPGCGRIFSNRQYLNHHKKYQH), 360–384 (FCCPEPACGKSFNFKKHLKEHVKLH), 390–412 (YICEFCARSFRTSSNLVIHRRIH), 418–440 (LQCEICGFTCRQKASLNWHRRKH), and 449–472 (FPCEFCGKRFEKPDSVVAHCSKSH). Ser471 carries the phosphoserine modification. Residues 478–533 (VQESPGSLGSSPSISAPEPLQSPEGTSFSTSYDSNPAPSTSISSPGVPAPRNTEKS) form a disordered region. Residues 481-492 (SPGSLGSSPSIS) are compositionally biased toward low complexity. Positions 500–521 (PEGTSFSTSYDSNPAPSTSISS) are enriched in polar residues.

The protein belongs to the krueppel C2H2-type zinc-finger protein family. In terms of processing, phosphorylation at Ser-471 results in loss of DNA-binding activity.

The protein resides in the nucleus. May act as an transcriptional repressor for PCK1 gene expression, in turns may participate in the hepatic gluconeogenesis regulation through the activated AMPK signaling pathway. The sequence is that of Zinc finger protein 692 from Rattus norvegicus (Rat).